A 119-amino-acid polypeptide reads, in one-letter code: Large ribosomal subunit protein bL20 (119 aa).

It belongs to the bacterial ribosomal protein bL20 family.

Functionally, binds directly to 23S ribosomal RNA and is necessary for the in vitro assembly process of the 50S ribosomal subunit. It is not involved in the protein synthesizing functions of that subunit. In Nitrosococcus oceani (strain ATCC 19707 / BCRC 17464 / JCM 30415 / NCIMB 11848 / C-107), this protein is Large ribosomal subunit protein bL20.